Consider the following 139-residue polypeptide: Large ribosomal subunit protein uL16 (139 aa).

Residues Met1–Gly19 are compositionally biased toward basic residues. Residues Met1–Lys22 are disordered.

It belongs to the universal ribosomal protein uL16 family. Part of the 50S ribosomal subunit.

In terms of biological role, binds 23S rRNA and is also seen to make contacts with the A and possibly P site tRNAs. This is Large ribosomal subunit protein uL16 from Acidothermus cellulolyticus (strain ATCC 43068 / DSM 8971 / 11B).